The chain runs to 424 residues: S-phase kinase-associated protein 2 (424 aa).

The mediates interaction with hepatitis C virus non-structural protein NS5A stretch occupies residues M1–D220. Positions S39–K73 are disordered. S64 carries the post-translational modification Phosphoserine. The short motif at R67–K73 is the Nuclear localization signal element. Residues K68 and K71 each carry the N6-acetyllysine; by p300/EP300 modification. Residues S72 and S75 each carry the phosphoserine modification. The F-box domain maps to G94–L140. 10 LRR repeats span residues V151–E176, H177–Q204, N210–R234, L235–R257, L258–T284, T286–R308, C309–E330, L334–L356, I359–L378, and K380–I401. S179 bears the Phosphoserine mark. Residues G402 to L424 form a mediates interaction with IFI27 region.

Part of a SCF(SKP2) complex consisting of CUL1, RBX1, SKP1 and SKP2. Component of a SCF(SKP2)-like complex containing CUL1, SKP1, TRIM21 and SKP2. Interacts directly with CUL1 and SKP1. Interacts with CKS1. Interacts with ASB2 which is the substrate-recognition component of a probable ECS E3 ubiquitin-protein ligase complex; ASB2 is likely to bridge the formation of dimeric E3-ubiquitin-protein ligase complexes composed of an ECS complex and an SCF(SKP2) complex. Interacts with the cyclin-A-CDK2 complex. Interacts with ORC1, phosphorylated CDT1, phosphorylated RBL2, ELF4, phosphorylated RAG2, FOXO1, UBP43, MYC, TOB1, TAL1 and KMT2A/MLL1. Interacts with TRIM21. Interacts with cyclin-E. Interacts with IFI27; promotes the ubiquitin-mediated proteasomal degradation of hepatitis C virus/HCV non-structural protein NS5A. Interacts with CARM1. As to quaternary structure, (Microbial infection) Interacts with hepatitis C virus/HCV non-structural protein NS5A; promotes the ubiquitin-mediated proteasomal degradation of NS5A. Phosphorylated on serine and threonine resudues in response to DNA damage, promoting 'Lys-63'-linked ubiquitination of NBN. Post-translationally, ubiquitinated by the APC/C complex, leading to its degradation by the proteasome. Deubiquitinated by USP13. In terms of processing, acetylation at Lys-68 and Lys-71 increases stability through impairment of APC/C-mediated proteolysis and promotes cytoplasmic retention. Deacetylated by SIRT3.

The protein resides in the cytoplasm. Its subcellular location is the nucleus. It functions in the pathway protein modification; protein ubiquitination. Functionally, substrate recognition component of a SCF (SKP1-CUL1-F-box protein) E3 ubiquitin-protein ligase complex which mediates the ubiquitination and subsequent proteasomal degradation of target proteins involved in cell cycle progression, signal transduction and transcription. Specifically recognizes phosphorylated CDKN1B/p27kip and is involved in regulation of G1/S transition. Degradation of CDKN1B/p27kip also requires CKS1. Recognizes target proteins ORC1, CDT1, RBL2, KMT2A/MLL1, CDK9, RAG2, NBN, FOXO1, UBP43, YTHDF2, and probably MYC, TOB1 and TAL1. Degradation of TAL1 also requires STUB1. Recognizes CDKN1A in association with CCNE1 or CCNE2 and CDK2. Promotes ubiquitination and destruction of CDH1 in a CK1-dependent manner, thereby regulating cell migration. Following phosphorylation in response to DNA damage, mediates 'Lys-63'-linked ubiquitination of NBN, promoting ATM recruitment to DNA damage sites and DNA repair via homologous recombination. In terms of biological role, through the ubiquitin-mediated proteasomal degradation of hepatitis C virus non-structural protein 5A, has an antiviral activity towards that virus. This is S-phase kinase-associated protein 2 (SKP2) from Homo sapiens (Human).